A 650-amino-acid polypeptide reads, in one-letter code: Phosphatidylinositol-3,5-bisphosphate 3-phosphatase MTMR14 (650 aa).

Residues 1–27 (MAGARAAAAAASAGSSASSGNQPPQEL) are disordered. Lysine 194 is subject to N6-acetyllysine. An N-linked (GlcNAc...) asparagine glycan is attached at asparagine 226. The active-site Phosphocysteine intermediate is the cysteine 330. The a 1,2-diacyl-sn-glycero-3-phospho-(1D-myo-inositol-3,5-bisphosphate) site is built by glycine 333, tryptophan 334, aspartate 335, arginine 336, and arginine 382. A 1,2-diacyl-sn-glycero-3-phospho-(1D-myo-inositol-3-phosphate) is bound by residues glycine 333, tryptophan 334, aspartate 335, arginine 336, and arginine 382. The segment at 476–546 (AAWRKSHSSS…PRSVDHPLPG (71 aa)) is disordered. Serine 518 is subject to Phosphoserine. N-linked (GlcNAc...) asparagine glycosylation is present at asparagine 519. Phosphoserine is present on residues serine 530, serine 580, and serine 624. Arginine 638 carries the post-translational modification Omega-N-methylarginine.

The protein belongs to the protein-tyrosine phosphatase family. Non-receptor class myotubularin subfamily. Expressed in various tissues, including heart, skeletal muscle, placenta, liver, lung, kidney and pancreas.

It is found in the cytoplasm. It catalyses the reaction a 1,2-diacyl-sn-glycero-3-phospho-(1D-myo-inositol-3,5-bisphosphate) + H2O = a 1,2-diacyl-sn-glycero-3-phospho-(1D-myo-inositol-5-phosphate) + phosphate. It carries out the reaction a 1,2-diacyl-sn-glycero-3-phospho-(1D-myo-inositol-3-phosphate) + H2O = a 1,2-diacyl-sn-glycero-3-phospho-(1D-myo-inositol) + phosphate. In terms of biological role, lipid phosphatase that specifically dephosphorylates the D-3 position of phosphatidylinositol 3-phosphate and phosphatidylinositol 3,5-bisphosphate, generating phosphatidylinositol and phosphatidylinositol 5-phosphate. The sequence is that of Phosphatidylinositol-3,5-bisphosphate 3-phosphatase MTMR14 from Homo sapiens (Human).